The primary structure comprises 179 residues: Bifunctional protein PyrR (179 aa).

A PRPP-binding motif is present at residues 100 to 112 (VILVDDVLFTGRT).

Belongs to the purine/pyrimidine phosphoribosyltransferase family. PyrR subfamily. In terms of assembly, homodimer and homohexamer; in equilibrium.

The enzyme catalyses UMP + diphosphate = 5-phospho-alpha-D-ribose 1-diphosphate + uracil. Its function is as follows. Regulates transcriptional attenuation of the pyrimidine nucleotide (pyr) operon by binding in a uridine-dependent manner to specific sites on pyr mRNA. This disrupts an antiterminator hairpin in the RNA and favors formation of a downstream transcription terminator, leading to a reduced expression of downstream genes. In terms of biological role, also displays a weak uracil phosphoribosyltransferase activity which is not physiologically significant. In Geobacillus thermodenitrificans (strain NG80-2), this protein is Bifunctional protein PyrR.